The primary structure comprises 454 residues: uncharacterized protein (454 aa).

Positions 73, 79, 82, and 154 each coordinate [4Fe-4S] cluster. 4 residues coordinate S-adenosyl-L-methionine: Q279, F307, D328, and D381. Residue C408 is the Nucleophile of the active site.

This sequence belongs to the class I-like SAM-binding methyltransferase superfamily. RNA M5U methyltransferase family.

This is an uncharacterized protein from Leptospira interrogans serogroup Icterohaemorrhagiae serovar Lai (strain 56601).